The primary structure comprises 283 residues: NAD kinase (283 aa).

Asp-66 serves as the catalytic Proton acceptor. NAD(+) contacts are provided by residues 66–67 (DG), 140–141 (ND), Arg-151, Lys-168, Asp-170, 181–186 (TGYCLS), and Gln-240.

It belongs to the NAD kinase family. Requires a divalent metal cation as cofactor.

The protein resides in the cytoplasm. It carries out the reaction NAD(+) + ATP = ADP + NADP(+) + H(+). Its function is as follows. Involved in the regulation of the intracellular balance of NAD and NADP, and is a key enzyme in the biosynthesis of NADP. Catalyzes specifically the phosphorylation on 2'-hydroxyl of the adenosine moiety of NAD to yield NADP. The chain is NAD kinase from Geobacter metallireducens (strain ATCC 53774 / DSM 7210 / GS-15).